Reading from the N-terminus, the 309-residue chain is Dihydroorotate dehydrogenase B (NAD(+)), catalytic subunit (309 aa).

FMN is bound by residues S21 and 45-46 (KA). Substrate-binding positions include K45 and 69 to 73 (NAIGL). Residues N99 and N127 each contribute to the FMN site. N127 provides a ligand contact to substrate. The active-site Nucleophile is the C130. Residues K165 and I191 each coordinate FMN. 192-193 (NT) lines the substrate pocket. FMN is bound by residues G217, 243–244 (GG), and 265–266 (GT).

Belongs to the dihydroorotate dehydrogenase family. Type 1 subfamily. Heterotetramer of 2 PyrK and 2 PyrD type B subunits. FMN serves as cofactor.

The protein localises to the cytoplasm. It catalyses the reaction (S)-dihydroorotate + NAD(+) = orotate + NADH + H(+). It functions in the pathway pyrimidine metabolism; UMP biosynthesis via de novo pathway; orotate from (S)-dihydroorotate (NAD(+) route): step 1/1. Catalyzes the conversion of dihydroorotate to orotate with NAD(+) as electron acceptor. The polypeptide is Dihydroorotate dehydrogenase B (NAD(+)), catalytic subunit (pyrD) (Bacillus cereus (strain ATCC 14579 / DSM 31 / CCUG 7414 / JCM 2152 / NBRC 15305 / NCIMB 9373 / NCTC 2599 / NRRL B-3711)).